The chain runs to 208 residues: ATP-dependent Clp protease proteolytic subunit 1 (208 aa).

The active-site Nucleophile is Ser-108. The active site involves His-133.

The protein belongs to the peptidase S14 family. In terms of assembly, fourteen ClpP subunits assemble into 2 heptameric rings which stack back to back to give a disk-like structure with a central cavity, resembling the structure of eukaryotic proteasomes.

Its subcellular location is the cytoplasm. The catalysed reaction is Hydrolysis of proteins to small peptides in the presence of ATP and magnesium. alpha-casein is the usual test substrate. In the absence of ATP, only oligopeptides shorter than five residues are hydrolyzed (such as succinyl-Leu-Tyr-|-NHMec, and Leu-Tyr-Leu-|-Tyr-Trp, in which cleavage of the -Tyr-|-Leu- and -Tyr-|-Trp bonds also occurs).. In terms of biological role, cleaves peptides in various proteins in a process that requires ATP hydrolysis. Has a chymotrypsin-like activity. Plays a major role in the degradation of misfolded proteins. The chain is ATP-dependent Clp protease proteolytic subunit 1 from Corynebacterium efficiens (strain DSM 44549 / YS-314 / AJ 12310 / JCM 11189 / NBRC 100395).